Here is a 263-residue protein sequence, read N- to C-terminus: Aminoglycoside (3'') (9) adenylyltransferase (263 aa).

It catalyses the reaction streptomycin + ATP = 3''-O-adenylylstreptomycin + diphosphate. The catalysed reaction is spectinomycin + ATP = 9-O-adenylylspectinomycin + diphosphate. Functionally, mediates bacterial resistance to the antibiotics streptomycin and spectinomycin. In Escherichia coli, this protein is Aminoglycoside (3'') (9) adenylyltransferase.